A 626-amino-acid polypeptide reads, in one-letter code: MARTAPAASFESLESDLDQKFAYPASSKTYIPGSRPDIRVPMRTILQTSTRTEKGEMPNPPIPVYDTSGPYSDPDVHIDLKAGLPALREKWIAERGDTEVLPGLSSEYGRDRANDPATAHLRFAQLTNPRRAKAGANVSQMHYARKGIITPEMEYVALRESLNLQALYDKPEYKALLRQHPGNALGAGLPLRPEDITPEFVRNEIATGRAIIPANINHTELEPMAIGRNFRVKINGNLGNSAVTSSLAEEVEKMVWSIRWGADTIMDLSTGKHIHETREWILRNSPVPIGTVPIYQALDKTGGIAEDLTWEMFRDTLIEQAEQGVDYFTIHAGVLLRYVPLTADRVTGIVSRGGSIMAKWCLAHHKENFLYTHFDEICEIMKAYDVSFSLGDGLRPGCIADSNDDAQFGELRTLGELTAKAWKHDVQVMIEGPGHVPLQRIQANMDEELKHCYEAPFYTLGPLVTDIAPGYDHITSGIGAANIGWMGTAMLCYVTPKEHLGLPDKEDVREGIITYKIAAHAADLAKGWPGAQLRDNALSKARFEFRWEDQFNLGLDPERARSYHDATLPAEGAKIAHFCSMCGPKFCSMKITQEVRDYAASLPKEAQQGMEEKSIEFLKKGSKIYS.

Residues Asn237, Met266, Tyr295, His331, 351-353, 392-395, and Glu431 contribute to the substrate site; these read SRG and DGLR. His435 is a Zn(2+) binding site. A substrate-binding site is contributed by Tyr458. Residue His499 participates in Zn(2+) binding. The [4Fe-4S] cluster site is built by Cys579, Cys582, and Cys587.

Belongs to the ThiC family. Homodimer. It depends on [4Fe-4S] cluster as a cofactor.

It carries out the reaction 5-amino-1-(5-phospho-beta-D-ribosyl)imidazole + S-adenosyl-L-methionine = 4-amino-2-methyl-5-(phosphooxymethyl)pyrimidine + CO + 5'-deoxyadenosine + formate + L-methionine + 3 H(+). It functions in the pathway cofactor biosynthesis; thiamine diphosphate biosynthesis. Catalyzes the synthesis of the hydroxymethylpyrimidine phosphate (HMP-P) moiety of thiamine from aminoimidazole ribotide (AIR) in a radical S-adenosyl-L-methionine (SAM)-dependent reaction. In Cupriavidus pinatubonensis (strain JMP 134 / LMG 1197) (Cupriavidus necator (strain JMP 134)), this protein is Phosphomethylpyrimidine synthase.